The following is a 711-amino-acid chain: T-box transcription factor TBX2 (711 aa).

A DNA-binding region (T-box) is located at residues 109–287 (LEAKELWDQF…NNPFAKGFRD (179 aa)). The interval 313–449 (PERDGAESDA…GEGKEPSLAP (137 aa)) is disordered. Over residues 326-340 (DPPPAREPPPSPSAA) the composition is skewed to pro residues. Residues S336, S342, and S360 each carry the phosphoserine modification. Basic and acidic residues-rich tracts occupy residues 363–372 (EPERTGEERS), 390–409 (TEPE…KEPT), and 421–444 (SLEK…EGKE). Residues 518–602 (GSGSSGGAGP…ATSAAAAAAA (85 aa)) are repression domain 1 (RD1). Phosphoserine is present on residues S623, S652, S656, and S675. The disordered stretch occupies residues 640–687 (TGLAAEGSKGGNSREPSPLPELALRKVGGPSRGALSPSGSAKEAASEL).

Binds DNA as a monomer. Interacts with CHD4, HDAC1 and HDAC2, perhaps as components of a NuRD-like complex. Interacts with CBX3, HMGB2 and PBX1. Interacts with PML. Post-translationally, phosphorylated. May be phosphorylated by p38 MAPK in response to UV irradiation stress. As to expression, in adults, highest levels in lung. Also found in heart, kidney, and ovary.

It is found in the nucleus. Transcription factor which acts as a transcriptional repressor. May also function as a transcriptional activator. Binds to the palindromic T site 5'-TTCACACCTAGGTGTGAA-3' DNA sequence, or a half-site, which are present in the regulatory region of several genes. Required for cardiac atrioventricular canal formation. May cooperate with NKX2.5 to negatively modulate expression of NPPA/ANF in the atrioventricular canal. May play a role as a positive regulator of TGFB2 expression, perhaps acting in concert with GATA4 in the developing outflow tract myocardium. Plays a role in limb pattern formation. Acts as a transcriptional repressor of ADAM10 gene expression, perhaps in concert with histone deacetylase HDAC1 as cofactor. Involved in branching morphogenesis in both developing lungs and adult mammary glands, via negative modulation of target genes; acting redundantly with TBX3. Required, together with TBX3, to maintain cell proliferation in the embryonic lung mesenchyme; perhaps acting downstream of SHH, BMP and TGFbeta signaling. Involved in modulating early inner ear development, acting independently of, and also redundantly with TBX3, in different subregions of the developing ear. Acts as a negative regulator of PML function in cellular senescence. Acts as a negative regulator of expression of CDKN1A/p21, IL33 and CCN4; repression of CDKN1A is enhanced in response to UV-induced stress, perhaps as a result of phosphorylation by p38 MAPK. Negatively modulates expression of CDKN2A/p19ARF and CDH1/E-cadherin. Plays a role in induction of the epithelial-mesenchymal transition (EMT). Plays a role in melanocyte proliferation, perhaps via regulation of cyclin CCND1. Involved in melanogenesis, acting via negative modulation of expression of DHICA oxidase/TYRP1 and P protein/OCA2. Involved in regulating retinal pigment epithelium (RPE) cell proliferation, perhaps via negatively modulating transcription of the transcription factor CEBPD. In Mus musculus (Mouse), this protein is T-box transcription factor TBX2 (Tbx2).